Reading from the N-terminus, the 243-residue chain is Venom peptide isomerase heavy chain (243 aa).

The Peptidase S1 domain maps to Ile-1 to Val-243. Cys-31 and Cys-47 are joined by a disulfide. Catalysis depends on charge relay system residues His-46 and Asp-96. An N-linked (GlcNAc...) asparagine glycan is attached at Asn-127. Disulfide bonds link Cys-159–Cys-181 and Cys-190–Cys-219. The active-site Charge relay system is Ser-194.

Belongs to the peptidase S1 family. In terms of assembly, heterodimer with venom peptide isomerase light chain; disulfide-linked. In terms of processing, N-linked glycan at Asn-127 consists of Man3-GlcNAc2-Fuc. In terms of tissue distribution, expressed by the venom gland.

Its subcellular location is the secreted. Its function is as follows. Peptide isomerase that inverts the chirality at the Ser-81 of omega-Aga IVB. Acts cofactor-independently. This chain is Venom peptide isomerase heavy chain, found in Agelenopsis aperta (North American funnel-web spider).